Reading from the N-terminus, the 345-residue chain is MGVCGYLFLPWKCLVVVSLRLLFLVPTGVPVRSGDATFPKAMDNVTVRQGESATLRCTIDDRVTRVAWLNRSTILYAGNDKWSIDPRVIILVNTPTQYSIMIQNVDVYDEGPYTCSVQTDNHPKTSRVHLIVQVPPQIMNISSDITVNEISSVTLLCLAIGRPEPTVTWRHLSVKEGQGFVSEDEYLEISDIKRDQSGEYECSALNDVAAPDVRKVKITVNYPPYISKAKNTGVSVGQKGILSCEASAVPMAEFQWFKEDTRLATGLDGVRIENKGRISTLTFFNVSEKDYGNYTCVATNKLGNTNASITLYGPGAVIDGVNSASRALACLWLSGTFFAHFFIKF.

Residues 1–27 (MGVCGYLFLPWKCLVVVSLRLLFLVPT) form the signal peptide. Ig-like C2-type domains follow at residues 39 to 126 (PKAM…PKTS), 136 to 219 (PQIM…VKIT), and 223 to 310 (PPYI…ASIT). Residues N44, N70, and N140 are each glycosylated (N-linked (GlcNAc...) asparagine). A disulfide bond links C57 and C115. 2 disulfide bridges follow: C157/C202 and C244/C296. 3 N-linked (GlcNAc...) asparagine glycosylation sites follow: N285, N293, and N306. Residue N322 is the site of GPI-anchor amidated asparagine attachment. Positions 323-345 (SASRALACLWLSGTFFAHFFIKF) are cleaved as a propeptide — removed in mature form.

It belongs to the immunoglobulin superfamily. IgLON family.

It localises to the cell membrane. Its function is as follows. Binds opioids in the presence of acidic lipids; probably involved in cell contact. This is Opioid-binding protein/cell adhesion molecule (Opcml) from Rattus norvegicus (Rat).